Here is a 103-residue protein sequence, read N- to C-terminus: Acyl carrier protein (103 aa).

A Carrier domain is found at 14–89; the sequence is NIVSNIVQDI…EFIDFTLQTI (76 aa). S49 bears the O-(pantetheine 4'-phosphoryl)serine mark.

The protein belongs to the acyl carrier protein (ACP) family. Post-translationally, 4'-phosphopantetheine is transferred from CoA to a specific serine of apo-ACP by AcpS. This modification is essential for activity because fatty acids are bound in thioester linkage to the sulfhydryl of the prosthetic group.

The protein resides in the plastid. The protein localises to the cyanelle. It functions in the pathway lipid metabolism; fatty acid biosynthesis. Its function is as follows. Carrier of the growing fatty acid chain in fatty acid biosynthesis. This is Acyl carrier protein from Cyanophora paradoxa.